The chain runs to 607 residues: Autophagy-related protein 16-1 (607 aa).

The interval 13 to 43 is interaction with ATG5; it reads WKRHISEQLRRRDRLQRQAFEEIILQYNKLL. The stretch at 79–230 forms a coiled coil; the sequence is DSQLQEMAQL…QKELAEAAKE (152 aa). A Phosphoserine modification is found at serine 139. The tract at residues 207 to 230 is WIPI2-binding; that stretch reads AENEKDSRRRQARLQKELAEAAKE. Residues 230–242 form an RB1CC1-binding region; the sequence is EPLPVEQDDDIEV. Phosphoserine is present on residues serine 269 and serine 287. The Caspase cleavage motif lies at 296–299; the sequence is DNVD. WD repeat units lie at residues 320-359, 364-403, 406-445, 447-484, 486-525, 532-573, and 575-607; these read AHDGEVNAVQFSPGSRLLATGGMDRRVKLWEVFGEKCEFK, GSNAGITSIEFDSAGSYLLAASNDFASRIWTVDDSRLRHT, GHSGKVLSAKFLLDNARIVSGSHDRTLKHWDLRSKVCIKT, FAGSSCNDIVCTEQCVMSGHFDKKIRFWDIRSESIVRE, ELLGKITALDLNPERTELLSCSRDDLLKVIDLRTNAIKQT, KCGS…KVLS, and QHSSSINAVAWSPSGLHVVSVDKGCKAVLWAQY.

It belongs to the WD repeat ATG16 family. In terms of assembly, homodimer. Homooligomer. Heterooligomer with ATG16L2. Interacts with WIPI1. Interacts with WIPI2. Interacts with RB1CC1; the interaction is required for ULK1 complex-dependent autophagy. Interacts with ATG5. Part of the minor complex composed of 4 sets of ATG12-ATG5 and ATG16L1 (400 kDa); this complex interacts with ATG3 leading to disruption of ATG7 interaction and promotion of ATG8-like proteins lipidation. Part of the major complex composed of 8 sets of ATG12-ATG5 and ATG16L1 (800 kDa). Interacts with RAB33B (GTP- and GDP-bound forms); the complex consists of a tetramer where two RAB33B molecules bind independently one molecule of the ATG16L1 homodimer; the interaction promotes ATG12-ATG5-ATG16L1 complex recruitment to phagophores. Interacts (via WD repeats) with TMEM59; the interaction mediates unconventional autophagic activity of TMEM59. Interacts with TLR2. Interacts (via WD repeats) with MEFV. Interacts with PPP1CA; the interaction dephosphorylates ATG16L1 causing dissociation of ATG12-ATG5-ATG16L1 complex. Interacts (via N-terminal) with CLTC. Interacts with NOD1. Interacts with NOD2. Interacts with TUFM. Interacts with TRIM16. Interacts (via WD repeats) with SPATA33. Interacts with IRGM. Proteolytic cleavage by activated CASP3 leads to degradation and may regulate autophagy upon cellular stress and apoptotic stimuli. In terms of processing, phosphorylation at Ser-139 promotes association with the ATG12-ATG5 conjugate to form the ATG12-ATG5-ATG16L1 complex.

The protein resides in the cytoplasm. Its subcellular location is the preautophagosomal structure membrane. The protein localises to the endosome membrane. It localises to the lysosome membrane. Plays an essential role in both canonical and non-canonical autophagy: interacts with ATG12-ATG5 to mediate the lipidation to ATG8 family proteins (MAP1LC3A, MAP1LC3B, MAP1LC3C, GABARAPL1, GABARAPL2 and GABARAP). Acts as a molecular hub, coordinating autophagy pathways via distinct domains that support either canonical or non-canonical signaling. During canonical autophagy, interacts with ATG12-ATG5 to mediate the conjugation of phosphatidylethanolamine (PE) to ATG8 proteins, to produce a membrane-bound activated form of ATG8. Thereby, controls the elongation of the nascent autophagosomal membrane. As part of the ATG8 conjugation system with ATG5 and ATG12, required for recruitment of LRRK2 to stressed lysosomes and induction of LRRK2 kinase activity in response to lysosomal stress. Also involved in non-canonical autophagy, a parallel pathway involving conjugation of ATG8 proteins to single membranes at endolysosomal compartments, probably by catalyzing conjugation of phosphatidylserine (PS) to ATG8. Non-canonical autophagy plays a key role in epithelial cells to limit lethal infection by influenza A (IAV) virus. Regulates mitochondrial antiviral signaling (MAVS)-dependent type I interferon (IFN-I) production. Negatively regulates NOD1- and NOD2-driven inflammatory cytokine response. Instead, promotes an autophagy-dependent antibacterial pathway together with NOD1 or NOD2. Plays a role in regulating morphology and function of Paneth cell. This chain is Autophagy-related protein 16-1, found in Pongo abelii (Sumatran orangutan).